We begin with the raw amino-acid sequence, 547 residues long: Sesquiterpene synthase TPS3 (547 aa).

(2E,6E)-farnesyl diphosphate is bound by residues arginine 265, aspartate 302, aspartate 306, arginine 443, and aspartate 446. Mg(2+)-binding residues include aspartate 302 and aspartate 306. The DDXXD motif signature appears at 302–306; that stretch reads DDIYD. Residues aspartate 446, threonine 450, and glutamate 454 each coordinate Mg(2+).

This sequence belongs to the terpene synthase family. Tpsb subfamily. Monomer. The cofactor is Mg(2+).

Its subcellular location is the cytoplasm. The catalysed reaction is (2E,6E)-farnesyl diphosphate = (1S,5S,6R)-alpha-bergamotene + diphosphate. The protein operates within secondary metabolite biosynthesis; terpenoid biosynthesis. Functionally, sesquiterpene synthase involved in the biosynthesis of volatile organic compounds. Mediates the conversion of (2E,6E)-farnesyl diphosphate (FPP) into alpha-bergamotene. Does not use (2E)-geranyl diphosphate (GPP) as substrate. This chain is Sesquiterpene synthase TPS3, found in Cananga odorata (Ylang-ylang tree).